Consider the following 428-residue polypeptide: Enolase (428 aa).

Gln-163 serves as a coordination point for (2R)-2-phosphoglycerate. Glu-205 serves as the catalytic Proton donor. Mg(2+)-binding residues include Asp-242, Glu-286, and Asp-313. The (2R)-2-phosphoglycerate site is built by Lys-338, Arg-367, Ser-368, and Lys-389. The Proton acceptor role is filled by Lys-338.

It belongs to the enolase family. The cofactor is Mg(2+).

The protein resides in the cytoplasm. It is found in the secreted. Its subcellular location is the cell surface. The catalysed reaction is (2R)-2-phosphoglycerate = phosphoenolpyruvate + H2O. It functions in the pathway carbohydrate degradation; glycolysis; pyruvate from D-glyceraldehyde 3-phosphate: step 4/5. Functionally, catalyzes the reversible conversion of 2-phosphoglycerate (2-PG) into phosphoenolpyruvate (PEP). It is essential for the degradation of carbohydrates via glycolysis. The polypeptide is Enolase (Bordetella petrii (strain ATCC BAA-461 / DSM 12804 / CCUG 43448)).